A 217-amino-acid chain; its full sequence is Membrane-spanning 4-domains subfamily A member 6C (217 aa).

Positions 1–20 (MIPQVVTNETITTISPNGIN) are enriched in polar residues. The segment at 1–33 (MIPQVVTNETITTISPNGINFPQKDESQPTQQR) is disordered. Topologically, residues 1 to 46 (MIPQVVTNETITTISPNGINFPQKDESQPTQQRQDSLKKHLKAEIK) are cytoplasmic. Residues 47–67 (VIVAIQIMCAVTVLALGIILA) traverse the membrane as a helical segment. Topologically, residues 68–84 (SVPPVPYFNSVFSVLLK) are extracellular. Residues 85–105 (SGYPFIGALFFIASGILSIIT) form a helical membrane-spanning segment. Over 106–121 (ERKSTKPLVDASLTLN) the chain is Cytoplasmic. Residues 122-142 (ILSVSFAFVGIIIISVSLAGL) form a helical membrane-spanning segment. The Extracellular segment spans residues 143–186 (HPASEQCKQSKELSLIEHDYYQPFYNSDRSECAVTKSILTGALS). Residues 187-207 (VMLIISVLELGLALLSAMLWL) traverse the membrane as a helical segment. Residues 208-217 (REGVLTSLRM) are Cytoplasmic-facing.

The protein belongs to the MS4A family. Expressed only by thymus, spleen, peripheral lymph node and bone marrow.

It localises to the membrane. In terms of biological role, may be involved in signal transduction as a component of a multimeric receptor complex. The chain is Membrane-spanning 4-domains subfamily A member 6C (Ms4a6c) from Mus musculus (Mouse).